Consider the following 145-residue polypeptide: MLPRGLKMAPRGKRLSSTPLEILFFLNGWYNATYFLLELFIFLYKGVLLPYPTANLVLDVVMLLLYLGIEVIRLFFGTKGNLCQRKMPLSISVALTFPSAMMASYYLLLQTYVLRLEAIMNGILLFFCGSELLLEVLTLAAFSRI.

4 helical membrane-spanning segments follow: residues 22–42 (ILFFLNGWYNATYFLLELFIF), 56–76 (LVLDVVMLLLYLGIEVIRLFF), 89–109 (LSISVALTFPSAMMASYYLLL), and 122–142 (GILLFFCGSELLLEVLTLAAF).

Part of the tectonic-like complex (also named B9 complex). Interacts with TMEM107.

It is found in the membrane. The protein localises to the cytoplasm. It localises to the cytoskeleton. Its subcellular location is the cilium basal body. Part of the tectonic-like complex which is required for tissue-specific ciliogenesis and may regulate ciliary membrane composition. This Homo sapiens (Human) protein is Transmembrane protein 216 (TMEM216).